Here is a 237-residue protein sequence, read N- to C-terminus: Ribosomal RNA small subunit methyltransferase G (237 aa).

S-adenosyl-L-methionine contacts are provided by residues Gly76, Phe81, 128–129, and Arg147; that span reads IE.

It belongs to the methyltransferase superfamily. RNA methyltransferase RsmG family.

The protein localises to the cytoplasm. In terms of biological role, specifically methylates the N7 position of a guanine in 16S rRNA. The sequence is that of Ribosomal RNA small subunit methyltransferase G from Prochlorococcus marinus (strain MIT 9301).